Consider the following 530-residue polypeptide: Bifunctional purine biosynthesis protein PurH (530 aa).

One can recognise an MGS-like domain in the interval 1 to 148 (MNNARPIRRA…KNHKDVTIVV (148 aa)).

The protein belongs to the PurH family.

The catalysed reaction is (6R)-10-formyltetrahydrofolate + 5-amino-1-(5-phospho-beta-D-ribosyl)imidazole-4-carboxamide = 5-formamido-1-(5-phospho-D-ribosyl)imidazole-4-carboxamide + (6S)-5,6,7,8-tetrahydrofolate. The enzyme catalyses IMP + H2O = 5-formamido-1-(5-phospho-D-ribosyl)imidazole-4-carboxamide. It functions in the pathway purine metabolism; IMP biosynthesis via de novo pathway; 5-formamido-1-(5-phospho-D-ribosyl)imidazole-4-carboxamide from 5-amino-1-(5-phospho-D-ribosyl)imidazole-4-carboxamide (10-formyl THF route): step 1/1. Its pathway is purine metabolism; IMP biosynthesis via de novo pathway; IMP from 5-formamido-1-(5-phospho-D-ribosyl)imidazole-4-carboxamide: step 1/1. The polypeptide is Bifunctional purine biosynthesis protein PurH (Vibrio atlanticus (strain LGP32) (Vibrio splendidus (strain Mel32))).